The following is a 203-amino-acid chain: N-(5'-phosphoribosyl)anthranilate isomerase (203 aa).

The protein belongs to the TrpF family.

It catalyses the reaction N-(5-phospho-beta-D-ribosyl)anthranilate = 1-(2-carboxyphenylamino)-1-deoxy-D-ribulose 5-phosphate. The protein operates within amino-acid biosynthesis; L-tryptophan biosynthesis; L-tryptophan from chorismate: step 3/5. This Geobacter sulfurreducens (strain ATCC 51573 / DSM 12127 / PCA) protein is N-(5'-phosphoribosyl)anthranilate isomerase.